Here is a 483-residue protein sequence, read N- to C-terminus: Betaine aldehyde dehydrogenase (483 aa).

The K(+) site is built by Ile-27 and Asp-93. 149–151 (GAW) lines the NAD(+) pocket. The active-site Charge relay system is the Lys-161. 175–178 (KPSE) contributes to the NAD(+) binding site. Val-179 contacts K(+). An NAD(+)-binding site is contributed by 228-231 (SVPT). Val-243 is a binding site for K(+). Catalysis depends on Glu-249, which acts as the Proton acceptor. Residues Gly-251, Cys-283, and Glu-380 each coordinate NAD(+). The active-site Nucleophile is the Cys-283. Residue Cys-283 is modified to Cysteine sulfenic acid (-SOH). Positions 450 and 453 each coordinate K(+). Catalysis depends on Glu-457, which acts as the Charge relay system.

Belongs to the aldehyde dehydrogenase family. As to quaternary structure, dimer of dimers. The cofactor is K(+).

It carries out the reaction betaine aldehyde + NAD(+) + H2O = glycine betaine + NADH + 2 H(+). Its pathway is amine and polyamine biosynthesis; betaine biosynthesis via choline pathway; betaine from betaine aldehyde: step 1/1. Functionally, involved in the biosynthesis of the osmoprotectant glycine betaine. Catalyzes the irreversible oxidation of betaine aldehyde to the corresponding acid. This is Betaine aldehyde dehydrogenase from Cereibacter sphaeroides (strain ATCC 17029 / ATH 2.4.9) (Rhodobacter sphaeroides).